A 229-amino-acid polypeptide reads, in one-letter code: Protein-L-isoaspartate O-methyltransferase (229 aa).

S78 is an active-site residue.

Belongs to the methyltransferase superfamily. L-isoaspartyl/D-aspartyl protein methyltransferase family.

It localises to the cytoplasm. The catalysed reaction is [protein]-L-isoaspartate + S-adenosyl-L-methionine = [protein]-L-isoaspartate alpha-methyl ester + S-adenosyl-L-homocysteine. In terms of biological role, catalyzes the methyl esterification of L-isoaspartyl residues in peptides and proteins that result from spontaneous decomposition of normal L-aspartyl and L-asparaginyl residues. It plays a role in the repair and/or degradation of damaged proteins. This is Protein-L-isoaspartate O-methyltransferase from Chromohalobacter salexigens (strain ATCC BAA-138 / DSM 3043 / CIP 106854 / NCIMB 13768 / 1H11).